Here is a 388-residue protein sequence, read N- to C-terminus: Chorismate synthase (388 aa).

Positions 39 and 45 each coordinate NADP(+). Residues 130–132 (RSS), 251–252 (NA), Gly296, 311–315 (KPIPT), and Arg337 each bind FMN.

It belongs to the chorismate synthase family. As to quaternary structure, homotetramer. It depends on FMNH2 as a cofactor.

The enzyme catalyses 5-O-(1-carboxyvinyl)-3-phosphoshikimate = chorismate + phosphate. It participates in metabolic intermediate biosynthesis; chorismate biosynthesis; chorismate from D-erythrose 4-phosphate and phosphoenolpyruvate: step 7/7. Its function is as follows. Catalyzes the anti-1,4-elimination of the C-3 phosphate and the C-6 proR hydrogen from 5-enolpyruvylshikimate-3-phosphate (EPSP) to yield chorismate, which is the branch point compound that serves as the starting substrate for the three terminal pathways of aromatic amino acid biosynthesis. This reaction introduces a second double bond into the aromatic ring system. This chain is Chorismate synthase, found in Streptococcus agalactiae serotype III (strain NEM316).